We begin with the raw amino-acid sequence, 312 residues long: Speedy protein A (312 aa).

The tract at residues 67–199 is speedy/Ringo box; Required for CDK-binding; the sequence is RQEMTAFFKL…SHYIWQRERS (133 aa). Ser221 is subject to Phosphoserine. Residue Thr223 is modified to Phosphothreonine.

Belongs to the Speedy/Ringo family. In terms of assembly, interacts with CDK1. Interacts with CDK2. May interact with CDKN1B/KIP1. Identified in a complex with CDK2 and CDKN1B/KIP1, where it interacts primarily with CDK2.

It localises to the nucleus. In terms of biological role, regulates the G1/S phase transition of the cell cycle by binding and activating CDK1 and CDK2. Contributes to CDK2 activation without promoting CDK2 phosphorylation, by inducing a conformation change of the CDK2 T-loop that obstructs the substrate-binding cleft prior to kinase activation. Interferes with CDKN1B-mediated inhibition of CDK2. Mediates cell survival during the DNA damage process through activation of CDK2. The polypeptide is Speedy protein A (Rattus norvegicus (Rat)).